Here is a 544-residue protein sequence, read N- to C-terminus: MAKDIYFNEDARKSLLSGIEKLSNAVKVTLGPKGRNVLIDKKFGSPTVTKDGVSVAREIELDNALENMGAQLLKEVAIKTNDLAGDGTTTATVLAYAIAREGLKNVSSGINPIGIKKGIEHAVTLASEKIRKSAKKITTKEEIAQVASISANNDTSIGEKIAEAMDRVGKDGVITVEESKTFDTTISYVEGMQFDRGYLSPYFSTNKENMSVSFDDAYILICEKKISTIKELLPVLEKVLNTNKPLLIIAEDIEGDALAALVLNSVRGALKVCAIKAPGFGDRRKAMLEDIAILTGGVFVSEELGLTLENVELEQLGQAKSVKVDKDNTTIINTGNKEQIKERAELIKKQIEETSSEYDKEKLQERLAKLVGGVAVINVGAVTELELKEKKHRVEDALSATRAAVEEGVVPGGGSTLIEVAMYLDTVDTSKLSYEEKQGFEIVKRSLEEPMRQIIANAGFESSIYIHQIKTDKKGLGFDAASFKWVNMIESGIIDPAKVTRSALQNAASIAGLLLTTECAITEVKEEKSNAGGGYPMDPGMGMM.

ATP contacts are provided by residues 29 to 32, K50, 86 to 90, G413, 479 to 481, and D495; these read TLGP, DGTTT, and DAA.

Belongs to the chaperonin (HSP60) family. As to quaternary structure, forms a cylinder of 14 subunits composed of two heptameric rings stacked back-to-back. Interacts with the co-chaperonin GroES.

The protein resides in the cytoplasm. The catalysed reaction is ATP + H2O + a folded polypeptide = ADP + phosphate + an unfolded polypeptide.. Functionally, together with its co-chaperonin GroES, plays an essential role in assisting protein folding. The GroEL-GroES system forms a nano-cage that allows encapsulation of the non-native substrate proteins and provides a physical environment optimized to promote and accelerate protein folding. The protein is Chaperonin GroEL of Borrelia turicatae (strain 91E135).